Here is a 282-residue protein sequence, read N- to C-terminus: Exo-glucosaminidase LytG (282 aa).

A signal peptide spans 1 to 29 (MARKKLKKRKLLISLFFLVSIPLALFVLA). Residues 203–281 (SLKSVDLNAS…DDSAVEIKEA (79 aa)) form the GW domain.

It belongs to the glycosyl hydrolase 73 family. Mg(2+) serves as cofactor.

It localises to the secreted. The protein resides in the cell wall. Its activity is regulated as follows. Inhibited by EDTA. Is the major glucosaminidase responsible for peptidoglycan structural determination during vegetative growth. Catalyzes the hydrolysis of 1,4-beta-linkages between N-acetyl-D-glucosamine and N-acetylmuramic acid residues in peptidoglycan. Acts processively from the ends of the glycan strands. Also plays a role in motility, chemotaxis and cell division. This is Exo-glucosaminidase LytG (lytG) from Bacillus subtilis (strain 168).